The primary structure comprises 409 residues: Chaetoglobosin A biosynthesis cluster protein C (409 aa).

Residues 51–120 (DLPANSRKLT…VKRQPQLRTR (70 aa)) form the HTH CENPB-type domain. The segment at residues 84–113 (RGVEDMANHLLRERDAPPVGKLWAHNFVKR) is a DNA-binding region (H-T-H motif). 2 disordered regions span residues 243–269 (PTHPDSRPGTAQPWASKTPYNAQETRS) and 320–350 (ANEPLSKRRKAKRTRIQLGGPLTVQDAQDPL). Positions 255 to 269 (PWASKTPYNAQETRS) are enriched in polar residues.

The protein resides in the nucleus. Its function is as follows. Part of the gene cluster that mediates the biosynthesis of chaetoglobosin A which has a unique inhibitory activity against actin polymerization in mammalian cells. Chaetoglobosin A and its intermediates are involved in the morphological differentiation of C.globosum. The first step of the pathway is the synthesis of prochaetoglobosin I via condensation of one acetyl-CoA, 8 malonyl-CoA, and a L-tryptophan molecule by the PKS-NRPS hybrid synthetase cheA, followed by reduction of backbone double bond to install desired geometry by the enoyl reductase cheB. Further multiple oxidation steps performed by the cytochrome P450 monooxygenases cheE and cheG, as well as by the FAD-linked oxidoreductase cheF, lead to the formation of chaetoglobosin A. Depending on the order of action of these reductases, distinct intermediates can be identified. Within the pathway, the cytochrome P450 monooxygenase cheE catalyzes a stereospecific epoxidation on prochaetoglobosin I, cytoglobosin D, and chaetoglobosin J intermediates. The FAD-linked oxidoreductase cheF performs dehydrogenation of the C-20 hydroxyl groups in the 20-dihyrochaetoglobosin A and cytoglobosin D intermediates. Finally, the cytochrome P450 monooxygenase cheG can catalyze the stereospecific dihydroxylation of prochaetoglobosin I and prochaetoglobosin IV at C-19 and C-20, respectively. The Diels-Alderase cheD may play a role in the post-PKS-NRPS biosynthetic steps catalyzing Diels-Alder cyclization. The sequence is that of Chaetoglobosin A biosynthesis cluster protein C from Chaetomium globosum (strain ATCC 6205 / CBS 148.51 / DSM 1962 / NBRC 6347 / NRRL 1970) (Soil fungus).